A 1710-amino-acid chain; its full sequence is Latrophilin Cirl (1710 aa).

Topologically, residues 1 to 767 (MLPTILSISY…LFTMFDGNMR (767 aa)) are extracellular. The SUEL-type lectin domain occupies 25-114 (ACEGKKLTIE…KYLEAHYQCI (90 aa)). N-linked (GlcNAc...) asparagine glycosylation is present at Asn142. Positions 183 to 304 (QHTAVTHSTP…SGSVVPGNGS (122 aa)) are disordered. Composition is skewed to polar residues over residues 185–198 (TAVT…STTA) and 256–265 (NATSPSNTRI). Residue Asn256 is glycosylated (N-linked (GlcNAc...) asparagine). Low complexity-rich tracts occupy residues 275–285 (DDGTLLTTKSS) and 295–304 (SGSVVPGNGS). N-linked (GlcNAc...) asparagine glycans are attached at residues Asn302 and Asn341. A disordered region spans residues 376-400 (YDEYDDDPSSTTPATSSADCLHNSS). The span at 384–394 (SSTTPATSSAD) shows a compositional bias: low complexity. N-linked (GlcNAc...) asparagine glycans are attached at residues Asn398, Asn655, Asn703, and Asn730. Residues 561-754 (RSVVQKVKNI…AILMDVVDEH (194 aa)) form the GAIN-B domain. Cystine bridges form between Cys709–Cys736 and Cys724–Cys738. The tract at residues 709-754 (CVFWNYIDHAWSANGCSLESTNRTHSVCSCNHLTNFAILMDVVDEH) is GPS. A helical membrane pass occupies residues 768–788 (IFIYISIGICVVFIVIALLTL). The Cytoplasmic segment spans residues 789–801 (KLFNGVFVKSART). Residues 802 to 822 (SIYTSIYLCLLAIELLFLLGI) form a helical membrane-spanning segment. Residues 823 to 828 (EQTETS) are Extracellular-facing. The helical transmembrane segment at 829 to 849 (IFCGFITIFLHCAILSGTAWF) threads the bilayer. Over 850-875 (CYEAFHSYSTLTSDELLLEVDQTPKV) the chain is Cytoplasmic. A helical transmembrane segment spans residues 876-896 (NCYYLLSYGLSLSVVAISLVI). Residues 897–920 (DPSTYTQNDYCVLMEANALFYATF) lie on the Extracellular side of the membrane. Residues 921–941 (VMPVLVFFVAAIGYTFLSWII) form a helical membrane-spanning segment. Residues 942-968 (MCRKSRTGLKTKEHTRLASVRFDIRCS) are Cytoplasmic-facing. Residues 969 to 989 (FVFLLLLSAVWCSAYFYLRGA) form a helical membrane-spanning segment. Topologically, residues 990-999 (KMDDDTADVY) are extracellular. A helical transmembrane segment spans residues 1000-1020 (GYCFICFNTLLGLYIFVFHCI). Residues 1021–1710 (QNEKIRREYR…VRCYLEPLAK (690 aa)) lie on the Cytoplasmic side of the membrane. Phosphoserine is present on residues Ser1156, Ser1253, Ser1260, Ser1329, and Ser1330. Residues 1234-1259 (KPNSGQHGKKKRGAGGVPASPSGSLH) form a disordered region. 2 disordered regions span residues 1452–1540 (GGGS…SDER) and 1568–1690 (DYGA…QQRH). The segment covering 1458 to 1483 (GGSVSSRSQQQQLKKQQQQQSLAQQR) has biased composition (low complexity). 2 stretches are compositionally biased toward acidic residues: residues 1491–1505 (DDDD…EEAT) and 1515–1528 (CDED…DLED). Positions 1638 to 1650 (QTPAQKRQQLQKL) are enriched in polar residues. Over residues 1651-1672 (SPQSTTSSSSHTSHSNPNPHPH) the composition is skewed to low complexity. Over residues 1673–1689 (QLTHPHPHQHPPHHQQR) the composition is skewed to basic residues.

It belongs to the G-protein coupled receptor 2 family. LN-TM7 subfamily. In terms of assembly, forms a heterodimer, consisting of a large extracellular region non-covalently linked to a seven-transmembrane moiety. Proteolytically cleaved into 2 subunits, an extracellular subunit and a seven-transmembrane subunit.

It localises to the cell membrane. This chain is Latrophilin Cirl, found in Drosophila erecta (Fruit fly).